A 421-amino-acid chain; its full sequence is UDP-N-acetylglucosamine 1-carboxyvinyltransferase (421 aa).

Residue 23–24 participates in phosphoenolpyruvate binding; the sequence is KN. Arginine 92 contacts UDP-N-acetyl-alpha-D-glucosamine. Cysteine 116 acts as the Proton donor in catalysis. Cysteine 116 is subject to 2-(S-cysteinyl)pyruvic acid O-phosphothioketal. UDP-N-acetyl-alpha-D-glucosamine is bound by residues 121-125, 161-164, aspartate 306, and isoleucine 328; these read RPVDL and KVSV.

The protein belongs to the EPSP synthase family. MurA subfamily.

It localises to the cytoplasm. It catalyses the reaction phosphoenolpyruvate + UDP-N-acetyl-alpha-D-glucosamine = UDP-N-acetyl-3-O-(1-carboxyvinyl)-alpha-D-glucosamine + phosphate. It participates in cell wall biogenesis; peptidoglycan biosynthesis. Cell wall formation. Adds enolpyruvyl to UDP-N-acetylglucosamine. The sequence is that of UDP-N-acetylglucosamine 1-carboxyvinyltransferase from Vibrio campbellii (strain ATCC BAA-1116).